The sequence spans 402 residues: WAT1-related protein At5g07050 (402 aa).

10 helical membrane-spanning segments follow: residues 20–40, 48–68, 74–94, 109–129, 149–169, 196–216, 229–249, 266–286, 293–313, and 318–338; these read FAMI…KISL, VLVV…AFFF, PKIT…GPVI, TFSC…AVLF, VVTV…VELF, FLKG…LFVL, LSLT…VTFV, LAAA…QGIV, VFAT…GSFV, and IFLG…AVLW. 2 EamA domains span residues 29–159 and 208–337; these read YAGM…MLMT and LAWA…YAVL.

Belongs to the drug/metabolite transporter (DMT) superfamily. Plant drug/metabolite exporter (P-DME) (TC 2.A.7.4) family.

Its subcellular location is the membrane. The chain is WAT1-related protein At5g07050 from Arabidopsis thaliana (Mouse-ear cress).